Here is a 166-residue protein sequence, read N- to C-terminus: MSEPTPRRPAYARLLDRAVRILAVRDHSEQELRRKLSAPVMGKNGPEEIDATPDDYERVISWCHEHHYLDDNRFVIRFIASRSRKGYGPARIRQELNQKGIARESTEKAMRECDIDWSEMAREQAVRKYGEPLPSTFSEKVKVQRFLLYRGYLMDDIQEIWRNFAD.

This sequence belongs to the RecX family.

Its subcellular location is the cytoplasm. In terms of biological role, modulates RecA activity. In Salmonella arizonae (strain ATCC BAA-731 / CDC346-86 / RSK2980), this protein is Regulatory protein RecX.